The primary structure comprises 565 residues: 4-coumarate--CoA ligase-like 2 (565 aa).

ATP contacts are provided by Ser-221, Ser-222, Gly-223, Thr-224, Thr-225, and Lys-229. A (E)-4-coumaroyl-AMP-binding site is contributed by Phe-265. Position 286 (Lys-286) interacts with CoA. The segment at 288 to 359 (DMAKLLSAVE…ENYPKVKILQ (72 aa)) is SBD1. Residues Gly-337, Gln-359, Gly-360, and Thr-364 each coordinate (E)-4-coumaroyl-AMP. Residues Gln-359, Gly-360, Thr-364, Asp-445, and Arg-460 each contribute to the ATP site. The SBD2 stretch occupies residues 360–424 (GYGLTESTAI…IRSPTVMKGY (65 aa)). Lys-462 and Lys-466 together coordinate (E)-4-coumaroyl-AMP. Gly-469 is a CoA binding site. An ATP-binding site is contributed by Lys-551. Positions 563–565 (SKL) match the Microbody targeting signal motif.

Belongs to the ATP-dependent AMP-binding enzyme family. The cofactor is Mg(2+).

Its subcellular location is the peroxisome. The catalysed reaction is (E)-4-coumarate + ATP + CoA = (E)-4-coumaroyl-CoA + AMP + diphosphate. The enzyme catalyses (E)-4-coumarate + ATP + H(+) = (E)-4-coumaroyl-AMP + diphosphate. It carries out the reaction (E)-4-coumaroyl-AMP + CoA = (E)-4-coumaroyl-CoA + AMP + H(+). Its function is as follows. Carboxylate--CoA ligase that may use 4-coumarate as substrate. Follows a two-step reaction mechanism, wherein the carboxylate substrate first undergoes adenylation by ATP, followed by a thioesterification in the presence of CoA to yield the final CoA thioester. The polypeptide is 4-coumarate--CoA ligase-like 2 (Arabidopsis thaliana (Mouse-ear cress)).